The sequence spans 168 residues: Large ribosomal subunit protein uL10 (168 aa).

Belongs to the universal ribosomal protein uL10 family. In terms of assembly, part of the ribosomal stalk of the 50S ribosomal subunit. The N-terminus interacts with L11 and the large rRNA to form the base of the stalk. The C-terminus forms an elongated spine to which L12 dimers bind in a sequential fashion forming a multimeric L10(L12)X complex.

In terms of biological role, forms part of the ribosomal stalk, playing a central role in the interaction of the ribosome with GTP-bound translation factors. This chain is Large ribosomal subunit protein uL10, found in Acinetobacter baylyi (strain ATCC 33305 / BD413 / ADP1).